Consider the following 444-residue polypeptide: Radical S-adenosyl methionine domain-containing protein 1, mitochondrial (444 aa).

A mitochondrion-targeting transit peptide spans 1-39; sequence MSTRVLTLTLLKKRHLMQCFWSTVGSVHLRSIASDKIPS. Positions 40–274 constitute a Radical SAM core domain; sequence HAVEASLYVH…CRVLEESGFH (235 aa). Tyrosine 47 lines the S-adenosyl-L-methionine pocket. The [4Fe-4S] cluster site is built by cysteine 53, cysteine 57, and cysteine 60. Residues glycine 102, 103–104, glutamate 135, glutamine 162, arginine 174, and aspartate 199 contribute to the S-adenosyl-L-methionine site; that span reads GT.

Belongs to the anaerobic coproporphyrinogen-III oxidase family. HemW subfamily. It depends on [4Fe-4S] cluster as a cofactor.

It localises to the mitochondrion. May be a heme chaperone, appears to bind heme. Homologous bacterial proteins do not have oxygen-independent coproporphyrinogen-III oxidase activity. Binds 1 [4Fe-4S] cluster. The cluster is coordinated with 3 cysteines and an exchangeable S-adenosyl-L-methionine. This is Radical S-adenosyl methionine domain-containing protein 1, mitochondrial (rsad1) from Danio rerio (Zebrafish).